Reading from the N-terminus, the 225-residue chain is Uridylate kinase (225 aa).

Glycine 9–serine 10 contributes to the ATP binding site. Residue glycine 46 coordinates UMP. Glycine 47 and arginine 51 together coordinate ATP. UMP contacts are provided by residues aspartate 67 and threonine 115 to threonine 121. 4 residues coordinate ATP: threonine 141, asparagine 142, tyrosine 147, and aspartate 150.

Belongs to the UMP kinase family. As to quaternary structure, homohexamer.

The protein localises to the cytoplasm. It catalyses the reaction UMP + ATP = UDP + ADP. The protein operates within pyrimidine metabolism; CTP biosynthesis via de novo pathway; UDP from UMP (UMPK route): step 1/1. Inhibited by UTP. Its function is as follows. Catalyzes the reversible phosphorylation of UMP to UDP. The sequence is that of Uridylate kinase from Methanococcus vannielii (strain ATCC 35089 / DSM 1224 / JCM 13029 / OCM 148 / SB).